We begin with the raw amino-acid sequence, 396 residues long: Putative carbamoyltransferase YgeW (396 aa).

Carbamoyl phosphate contacts are provided by residues 71-74 (STRT), Gln98, 165-168 (HPTQ), and 330-331 (CL).

Belongs to the aspartate/ornithine carbamoyltransferase superfamily. As to quaternary structure, homotrimer.

In Escherichia coli O6:H1 (strain CFT073 / ATCC 700928 / UPEC), this protein is Putative carbamoyltransferase YgeW (ygeW).